The following is a 266-amino-acid chain: Thymidylate synthase (266 aa).

Arginine 24 lines the dUMP pocket. Histidine 54 contributes to the (6R)-5,10-methylene-5,6,7,8-tetrahydrofolate binding site. 129–130 (RR) provides a ligand contact to dUMP. The active-site Nucleophile is the cysteine 149. Residues 169 to 172 (RSAD), asparagine 180, and 210 to 212 (HIY) each bind dUMP. (6R)-5,10-methylene-5,6,7,8-tetrahydrofolate is bound at residue aspartate 172. Alanine 265 is a binding site for (6R)-5,10-methylene-5,6,7,8-tetrahydrofolate.

The protein belongs to the thymidylate synthase family. Bacterial-type ThyA subfamily. As to quaternary structure, homodimer.

The protein resides in the cytoplasm. It carries out the reaction dUMP + (6R)-5,10-methylene-5,6,7,8-tetrahydrofolate = 7,8-dihydrofolate + dTMP. The protein operates within pyrimidine metabolism; dTTP biosynthesis. Its function is as follows. Catalyzes the reductive methylation of 2'-deoxyuridine-5'-monophosphate (dUMP) to 2'-deoxythymidine-5'-monophosphate (dTMP) while utilizing 5,10-methylenetetrahydrofolate (mTHF) as the methyl donor and reductant in the reaction, yielding dihydrofolate (DHF) as a by-product. This enzymatic reaction provides an intracellular de novo source of dTMP, an essential precursor for DNA biosynthesis. The protein is Thymidylate synthase of Mycobacterium leprae (strain TN).